Here is a 67-residue protein sequence, read N- to C-terminus: Beta-defensin 9 (67 aa).

The first 24 residues, 1-24 (MRTLCSLLLICCLLFSYTTPAANS), serve as a signal peptide directing secretion. Cystine bridges form between Cys-34-Cys-62, Cys-41-Cys-55, and Cys-45-Cys-63.

This sequence belongs to the beta-defensin family. As to expression, weakly expressed in adult and neonatal brain.

It localises to the secreted. Functionally, has antibacterial activity. The protein is Beta-defensin 9 (Defb9) of Mus musculus (Mouse).